The sequence spans 529 residues: Listeriolysin O (529 aa).

An N-terminal signal peptide occupies residues 1-24; sequence MKKIMLVFITLILVSLPIAQQTEA. 4 beta stranded membrane-spanning segments follow: residues 214-227, 234-243, 312-321, and 329-341; these read ESQL…AFKA, VNFGAISEGK, STKVKAAFDA, and SGDV…IKNS. Residues 483–493 carry the Conserved undecapeptide motif; sequence ECTGLAWEWWR. Residues 515 to 516 carry the Cholesterol binding motif; it reads TL.

Belongs to the cholesterol-dependent cytolysin family. Homooligomeric pore complex of 35 to 50 subunits; when inserted in the host membrane.

The protein localises to the secreted. It localises to the host membrane. The protein resides in the host cell membrane. Its activity is regulated as follows. Activity of listeriolysin O is regulated on multiple levels. It should be high in the phagosome, thereby allowing escape of the bacteria from the phagosomal compartment. Then, once inside the host cytosol, the activity must be controlled to prevent lysis of the host plasma membrane and loss of the intracellular environment. In terms of biological role, a cholesterol-dependent toxin that causes cytolysis by forming pores in cholesterol containing host membranes. After binding to target membranes, the protein undergoes a major conformation change, leading to its insertion in the host membrane and formation of an oligomeric pore complex. Cholesterol is required for binding to host membranes, membrane insertion and pore formation; cholesterol binding is mediated by a Thr-Leu pair in the C-terminus. Acts as a major virulence factor required for the escape of bacteria from phagosomal vacuoles and entry into the host cytosol. Can be reversibly inactivated by oxidation. The chain is Listeriolysin O (hly) from Listeria monocytogenes serotype 4b (strain CLIP80459).